The sequence spans 442 residues: tRNA modification GTPase MnmE (442 aa).

(6S)-5-formyl-5,6,7,8-tetrahydrofolate contacts are provided by R21, E79, and K118. The TrmE-type G domain maps to 214–367 (GFKIAIVGKP…LKEELQNYLN (154 aa)). N224 is a K(+) binding site. GTP is bound by residues 224–229 (NVGKSS), 243–249 (SDIAGTT), and 268–271 (DTAG). Mg(2+) is bound at residue S228. Residues S243, I245, and T248 each contribute to the K(+) site. T249 serves as a coordination point for Mg(2+). K442 contributes to the (6S)-5-formyl-5,6,7,8-tetrahydrofolate binding site.

The protein belongs to the TRAFAC class TrmE-Era-EngA-EngB-Septin-like GTPase superfamily. TrmE GTPase family. Homodimer. Heterotetramer of two MnmE and two MnmG subunits. K(+) is required as a cofactor.

It is found in the cytoplasm. Exhibits a very high intrinsic GTPase hydrolysis rate. Involved in the addition of a carboxymethylaminomethyl (cmnm) group at the wobble position (U34) of certain tRNAs, forming tRNA-cmnm(5)s(2)U34. In Campylobacter jejuni (strain RM1221), this protein is tRNA modification GTPase MnmE.